A 443-amino-acid polypeptide reads, in one-letter code: Thymidine phosphorylase (443 aa).

It belongs to the thymidine/pyrimidine-nucleoside phosphorylase family. In terms of assembly, homodimer.

It carries out the reaction thymidine + phosphate = 2-deoxy-alpha-D-ribose 1-phosphate + thymine. It functions in the pathway pyrimidine metabolism; dTMP biosynthesis via salvage pathway; dTMP from thymine: step 1/2. Its function is as follows. The enzymes which catalyze the reversible phosphorolysis of pyrimidine nucleosides are involved in the degradation of these compounds and in their utilization as carbon and energy sources, or in the rescue of pyrimidine bases for nucleotide synthesis. The sequence is that of Thymidine phosphorylase from Shewanella woodyi (strain ATCC 51908 / MS32).